The sequence spans 488 residues: ATP synthase subunit beta (488 aa).

164-171 (GGAGVGKT) serves as a coordination point for ATP.

This sequence belongs to the ATPase alpha/beta chains family. F-type ATPases have 2 components, CF(1) - the catalytic core - and CF(0) - the membrane proton channel. CF(1) has five subunits: alpha(3), beta(3), gamma(1), delta(1), epsilon(1). CF(0) has four main subunits: a(1), b(1), b'(1) and c(9-12).

Its subcellular location is the cellular thylakoid membrane. The enzyme catalyses ATP + H2O + 4 H(+)(in) = ADP + phosphate + 5 H(+)(out). Functionally, produces ATP from ADP in the presence of a proton gradient across the membrane. The catalytic sites are hosted primarily by the beta subunits. The chain is ATP synthase subunit beta from Prochlorococcus marinus (strain MIT 9211).